The primary structure comprises 664 residues: Protein cueball (664 aa).

Positions 1-21 (MRNLGIAVTFAVLLVIGYVTA) are cleaved as a signal peptide. At 22-552 (LEWDAVVTTD…VTYCKNSFNR (531 aa)) the chain is on the extracellular side. Asn-40, Asn-140, and Asn-188 each carry an N-linked (GlcNAc...) asparagine glycan. 3 LDL-receptor class B repeats span residues 115–157 (RKLY…ENHD), 168–211 (RHLY…DHYN), and 212–257 (NRIY…NSQY). EGF-like domains follow at residues 367–399 (EIPICNNFCVHGECVVGADSRPMCKCHAEFEGE), 402–438 (DRNICDGYCLNNGRCALSATGQRSCTCSKNFSGARCE), and 473–510 (EEYTCNNYCLHDGTCILNNDTMLVECRCGSEYTGKRCE). 8 cysteine pairs are disulfide-bonded: Cys-371–Cys-380, Cys-375–Cys-390, Cys-406–Cys-416, Cys-410–Cys-426, Cys-428–Cys-437, Cys-477–Cys-487, Cys-481–Cys-498, and Cys-500–Cys-509. Asn-431 is a glycosylation site (N-linked (GlcNAc...) asparagine). A glycan (N-linked (GlcNAc...) asparagine) is linked at Asn-491. The N-linked (GlcNAc...) asparagine glycan is linked to Asn-551. The helical transmembrane segment at 553-573 (TVVYVSLAFTASLVTLVTILC) threads the bilayer. The Cytoplasmic portion of the chain corresponds to 574–664 (TVRRMYERNR…KLPSCVAEKN (91 aa)).

It belongs to the cueball family.

The protein localises to the cell membrane. Functionally, has a role in spermatogenesis and oogenesis. The polypeptide is Protein cueball (Aedes aegypti (Yellowfever mosquito)).